A 216-amino-acid polypeptide reads, in one-letter code: ATP phosphoribosyltransferase (216 aa).

The protein belongs to the ATP phosphoribosyltransferase family. Short subfamily. In terms of assembly, heteromultimer composed of HisG and HisZ subunits.

The protein localises to the cytoplasm. The catalysed reaction is 1-(5-phospho-beta-D-ribosyl)-ATP + diphosphate = 5-phospho-alpha-D-ribose 1-diphosphate + ATP. The protein operates within amino-acid biosynthesis; L-histidine biosynthesis; L-histidine from 5-phospho-alpha-D-ribose 1-diphosphate: step 1/9. Catalyzes the condensation of ATP and 5-phosphoribose 1-diphosphate to form N'-(5'-phosphoribosyl)-ATP (PR-ATP). Has a crucial role in the pathway because the rate of histidine biosynthesis seems to be controlled primarily by regulation of HisG enzymatic activity. This Chromohalobacter salexigens (strain ATCC BAA-138 / DSM 3043 / CIP 106854 / NCIMB 13768 / 1H11) protein is ATP phosphoribosyltransferase.